A 447-amino-acid chain; its full sequence is GTPase Der (447 aa).

2 EngA-type G domains span residues 4-165 (QIIT…PEEE) and 180-357 (LQIV…KIWN). GTP-binding positions include 10 to 17 (GRPNVGKS), 57 to 61 (DTPGL), 119 to 122 (NKCE), 186 to 193 (GRPNAGKS), 233 to 237 (DTAGL), and 298 to 301 (NKWD). The KH-like domain occupies 358-443 (KKITTSKLNE…PIRFIYVKTK (86 aa)).

It belongs to the TRAFAC class TrmE-Era-EngA-EngB-Septin-like GTPase superfamily. EngA (Der) GTPase family. Associates with the 50S ribosomal subunit.

GTPase that plays an essential role in the late steps of ribosome biogenesis. This chain is GTPase Der, found in Rickettsia conorii (strain ATCC VR-613 / Malish 7).